The primary structure comprises 216 residues: Regulator of G-protein signaling 19 (216 aa).

The span at Met-1–Arg-19 shows a compositional bias: basic and acidic residues. A disordered region spans residues Met-1–Pro-30. Phosphoserine occurs at positions 24 and 97. The 117-residue stretch at Ser-90 to Leu-206 folds into the RGS domain. Residue Ser-151 is modified to Phosphoserine; by MAPK1 and MAPK3. The interval Leu-207–Ala-216 is interaction with GIPC.

As to quaternary structure, interacts with GIPC PDZ domain. Interacts with GNAO1. Fatty acylated. Heavily palmitoylated in the cysteine string motif. Post-translationally, phosphorylated, mainly on serine residues.

It localises to the membrane. Its function is as follows. Inhibits signal transduction by increasing the GTPase activity of G protein alpha subunits thereby driving them into their inactive GDP-bound form. Binds to G-alpha subfamily 1 members, with the order G(i)a3 &gt; G(i)a1 &gt; G(o)a &gt;&gt; G(z)a/G(i)a2. Activity on G(z)-alpha is inhibited by phosphorylation and palmitoylation of the G-protein. This is Regulator of G-protein signaling 19 (Rgs19) from Mus musculus (Mouse).